The sequence spans 360 residues: Thioredoxin domain-containing protein 15 (360 aa).

Positions 1–32 are cleaved as a signal peptide; the sequence is MVPAAGRRPPRVMRLLGWWQVLLWVLGLPVRG. The Extracellular portion of the chain corresponds to 33–321; it reads VEVAEESGRL…GPLPSTLIKS (289 aa). The interval 141-173 is disordered; sequence PDREEEYYTEPEVAESDAAPTEDSNNTESLKSP. Positions 143-155 are enriched in acidic residues; sequence REEEYYTEPEVAE. The region spanning 153-296 is the Thioredoxin domain; that stretch reads VAESDAAPTE…LKIFIFNQTG (144 aa). N-linked (GlcNAc...) asparagine glycans are attached at residues Asn-187, Asn-194, Asn-206, and Asn-293. Residues 322–342 traverse the membrane as a helical segment; the sequence is VDWLLVFSLFFLISFIMYATI. Over 343–360 the chain is Cytoplasmic; sequence RTESIRWLIPGQEQEHVE.

The protein localises to the cell projection. It localises to the cilium membrane. Its function is as follows. Acts as a positive regulator of ciliary hedgehog signaling. Involved in ciliogenesis. This Homo sapiens (Human) protein is Thioredoxin domain-containing protein 15 (TXNDC15).